The sequence spans 280 residues: Diaminopimelate epimerase (280 aa).

Substrate contacts are provided by asparagine 13 and asparagine 66. The active-site Proton donor is cysteine 75. Substrate contacts are provided by residues 76–77 (GN), asparagine 165, asparagine 198, and 216–217 (ER). Catalysis depends on cysteine 225, which acts as the Proton acceptor. Position 226 to 227 (226 to 227 (GT)) interacts with substrate.

Belongs to the diaminopimelate epimerase family. As to quaternary structure, homodimer.

It is found in the cytoplasm. It catalyses the reaction (2S,6S)-2,6-diaminopimelate = meso-2,6-diaminopimelate. The protein operates within amino-acid biosynthesis; L-lysine biosynthesis via DAP pathway; DL-2,6-diaminopimelate from LL-2,6-diaminopimelate: step 1/1. Catalyzes the stereoinversion of LL-2,6-diaminopimelate (L,L-DAP) to meso-diaminopimelate (meso-DAP), a precursor of L-lysine and an essential component of the bacterial peptidoglycan. The polypeptide is Diaminopimelate epimerase (Cyanothece sp. (strain PCC 7425 / ATCC 29141)).